The sequence spans 342 residues: Holliday junction branch migration complex subunit RuvB (342 aa).

Positions 2-181 (TDNPLLSSAS…FGIPVRLQFY (180 aa)) are large ATPase domain (RuvB-L). ATP is bound by residues Leu-20, Arg-21, Gly-62, Lys-65, Thr-66, Thr-67, Arg-171, Tyr-181, and Arg-218. Thr-66 provides a ligand contact to Mg(2+). Positions 182–252 (SVEELERVVA…IADNALTRLE (71 aa)) are small ATPAse domain (RuvB-S). Residues 255–342 (KIGLDLQDRR…QMPGLFGPDE (88 aa)) form a head domain (RuvB-H) region. Arg-291, Arg-310, and Arg-315 together coordinate DNA.

Belongs to the RuvB family. In terms of assembly, homohexamer. Forms an RuvA(8)-RuvB(12)-Holliday junction (HJ) complex. HJ DNA is sandwiched between 2 RuvA tetramers; dsDNA enters through RuvA and exits via RuvB. An RuvB hexamer assembles on each DNA strand where it exits the tetramer. Each RuvB hexamer is contacted by two RuvA subunits (via domain III) on 2 adjacent RuvB subunits; this complex drives branch migration. In the full resolvosome a probable DNA-RuvA(4)-RuvB(12)-RuvC(2) complex forms which resolves the HJ.

It is found in the cytoplasm. It carries out the reaction ATP + H2O = ADP + phosphate + H(+). In terms of biological role, the RuvA-RuvB-RuvC complex processes Holliday junction (HJ) DNA during genetic recombination and DNA repair, while the RuvA-RuvB complex plays an important role in the rescue of blocked DNA replication forks via replication fork reversal (RFR). RuvA specifically binds to HJ cruciform DNA, conferring on it an open structure. The RuvB hexamer acts as an ATP-dependent pump, pulling dsDNA into and through the RuvAB complex. RuvB forms 2 homohexamers on either side of HJ DNA bound by 1 or 2 RuvA tetramers; 4 subunits per hexamer contact DNA at a time. Coordinated motions by a converter formed by DNA-disengaged RuvB subunits stimulates ATP hydrolysis and nucleotide exchange. Immobilization of the converter enables RuvB to convert the ATP-contained energy into a lever motion, pulling 2 nucleotides of DNA out of the RuvA tetramer per ATP hydrolyzed, thus driving DNA branch migration. The RuvB motors rotate together with the DNA substrate, which together with the progressing nucleotide cycle form the mechanistic basis for DNA recombination by continuous HJ branch migration. Branch migration allows RuvC to scan DNA until it finds its consensus sequence, where it cleaves and resolves cruciform DNA. The polypeptide is Holliday junction branch migration complex subunit RuvB (Novosphingobium aromaticivorans (strain ATCC 700278 / DSM 12444 / CCUG 56034 / CIP 105152 / NBRC 16084 / F199)).